A 338-amino-acid chain; its full sequence is MIERNWNELIRPEKPQIETGADATRKARIVAEPLERGFGVTLGNALRRVLLSSLQGAAVTAIQIDGVVHEFSSLEGVREDVVDIVLNIKQLAVRMHAEGPKRMTLRATGPGPVTAGQIETPADIEILNPDHVLCTLDDGASVRMEFTVNNGKGYVPADRNRPEDAPIGLIAVDALYSPVKRVAYRVEPTRQGQSLDYDKLILEVETNGAVTPVDAVAYAARILQDQLQIFITFEEPKAKSADESKPELPFNPALLKKVDELELSVRSANCLKNDNIVYIGDLIQKTEAEMLRTPNFGRKSLNEIKEVLAGMGLHLGMDVPNWPPENIEDLAKKFEDQI.

An alpha N-terminal domain (alpha-NTD) region spans residues methionine 1–glutamate 234. The interval phenylalanine 250–isoleucine 338 is alpha C-terminal domain (alpha-CTD).

Belongs to the RNA polymerase alpha chain family. As to quaternary structure, homodimer. The RNAP catalytic core consists of 2 alpha, 1 beta, 1 beta' and 1 omega subunit. When a sigma factor is associated with the core the holoenzyme is formed, which can initiate transcription.

It catalyses the reaction RNA(n) + a ribonucleoside 5'-triphosphate = RNA(n+1) + diphosphate. DNA-dependent RNA polymerase catalyzes the transcription of DNA into RNA using the four ribonucleoside triphosphates as substrates. This chain is DNA-directed RNA polymerase subunit alpha, found in Caulobacter vibrioides (strain ATCC 19089 / CIP 103742 / CB 15) (Caulobacter crescentus).